The primary structure comprises 266 residues: Metallo-beta-lactamase VIM-2 (266 aa).

The N-terminal stretch at 1–20 is a signal peptide; sequence MFKLLSKLLVYLTASIMAIA. Zn(2+)-binding residues include histidine 114, histidine 116, and cysteine 198.

This sequence belongs to the metallo-beta-lactamase superfamily. Class-B beta-lactamase family. As to quaternary structure, monomer. The cofactor is Zn(2+).

The protein localises to the periplasm. It catalyses the reaction a beta-lactam + H2O = a substituted beta-amino acid. With respect to regulation, inhibited by chelating agents such as EDTA. Inhibited by a fungal natural product, aspergillomarasmine A (AMA). Inhibited by 2-triazolylthioacetamides. Its function is as follows. Class B beta-lactamase which confers resistance to the beta-lactam antibiotics, including penicillins, cephalosporins and carbapenems. Acts via hydrolysis of the beta-lactam ring. Has penicillin-, cephalosporin- and carbapenem-hydrolyzing activities. The polypeptide is Metallo-beta-lactamase VIM-2 (Escherichia coli).